Consider the following 877-residue polypeptide: DNA repair protein rad16 (877 aa).

Serine 71 is modified (phosphoserine; by CK2). A disordered region spans residues 440–490 (SKSIKKPEPSKEREASNTTSRKGVPPSKRRRVRGGNNATSRTTSDNTDAND). Residues 444 to 454 (KKPEPSKEREA) show a composition bias toward basic and acidic residues. Positions 475-490 (NNATSRTTSDNTDAND) are enriched in polar residues. Residues 652–732 (RVIVDLREFR…IPVLLIEFEQ (81 aa)) form the ERCC4 domain.

This sequence belongs to the XPF family. Heterodimer composed of rad16 and swi10.

Its subcellular location is the nucleus. It localises to the cytoplasm. The protein resides in the cytoskeleton. The protein localises to the microtubule organizing center. It is found in the spindle pole body. Endonuclease that specifically degrades single-stranded DNA and which is involved in nucleotide excision repair of DNA damaged with UV light, bulky adducts, or cross-linking agents. Required for double strand break-induced interchromosomal gene conversion. This Schizosaccharomyces pombe (strain 972 / ATCC 24843) (Fission yeast) protein is DNA repair protein rad16 (rad16).